Here is a 327-residue protein sequence, read N- to C-terminus: uncharacterized protein (327 aa).

The disordered stretch occupies residues 12 to 31 (PLGTTKSYHMNTSTVSPPSP). 2 helical membrane passes run 183-203 (VSSP…PVIL) and 292-312 (VGVG…GLLM).

The protein resides in the membrane. This is an uncharacterized protein from Arabidopsis thaliana (Mouse-ear cress).